Consider the following 58-residue polypeptide: Photosystem II reaction center protein K (58 aa).

Residues 1-21 constitute a propeptide that is removed on maturation; the sequence is MLAIFNIYLDNAFHLNGIILA. A helical transmembrane segment spans residues 29-49; that stretch reads IFDPIVDVMPIIPVFFFLLAF.

This sequence belongs to the PsbK family. In terms of assembly, PSII is composed of 1 copy each of membrane proteins PsbA, PsbB, PsbC, PsbD, PsbE, PsbF, PsbH, PsbI, PsbJ, PsbK, PsbL, PsbM, PsbT, PsbX, PsbY, PsbZ, Psb30/Ycf12, at least 3 peripheral proteins of the oxygen-evolving complex and a large number of cofactors. It forms dimeric complexes.

Its subcellular location is the plastid. It localises to the chloroplast thylakoid membrane. One of the components of the core complex of photosystem II (PSII). PSII is a light-driven water:plastoquinone oxidoreductase that uses light energy to abstract electrons from H(2)O, generating O(2) and a proton gradient subsequently used for ATP formation. It consists of a core antenna complex that captures photons, and an electron transfer chain that converts photonic excitation into a charge separation. The chain is Photosystem II reaction center protein K from Physcomitrium patens (Spreading-leaved earth moss).